Consider the following 502-residue polypeptide: ATP synthase subunit alpha (502 aa).

Residue 169–176 (GDRQTGKT) coordinates ATP.

It belongs to the ATPase alpha/beta chains family. F-type ATPases have 2 components, CF(1) - the catalytic core - and CF(0) - the membrane proton channel. CF(1) has five subunits: alpha(3), beta(3), gamma(1), delta(1), epsilon(1). CF(0) has three main subunits: a(1), b(2) and c(9-12). The alpha and beta chains form an alternating ring which encloses part of the gamma chain. CF(1) is attached to CF(0) by a central stalk formed by the gamma and epsilon chains, while a peripheral stalk is formed by the delta and b chains.

Its subcellular location is the cell inner membrane. The enzyme catalyses ATP + H2O + 4 H(+)(in) = ADP + phosphate + 5 H(+)(out). Its function is as follows. Produces ATP from ADP in the presence of a proton gradient across the membrane. The alpha chain is a regulatory subunit. The protein is ATP synthase subunit alpha of Desulfovibrio desulfuricans (strain ATCC 27774 / DSM 6949 / MB).